We begin with the raw amino-acid sequence, 476 residues long: Cysteine--tRNA ligase (476 aa).

Position 30 (C30) interacts with Zn(2+). The short motif at 32–42 (PTVYNYIHIGN) is the 'HIGH' region element. Residues C215, H240, and E244 each coordinate Zn(2+). Residues 274–278 (KMSKS) carry the 'KMSKS' region motif. Residue K277 participates in ATP binding.

It belongs to the class-I aminoacyl-tRNA synthetase family. Monomer. The cofactor is Zn(2+).

The protein resides in the cytoplasm. The catalysed reaction is tRNA(Cys) + L-cysteine + ATP = L-cysteinyl-tRNA(Cys) + AMP + diphosphate. This chain is Cysteine--tRNA ligase, found in Lactobacillus helveticus (strain DPC 4571).